Here is a 1594-residue protein sequence, read N- to C-terminus: Calpain-D (1594 aa).

2 RanBP2-type zinc fingers span residues 1-35 (MGTI…VRKV) and 135-164 (LNRR…VSYL). Disordered stretches follow at residues 210–256 (EEQH…TAID), 371–400 (EPQQ…NPTQ), 420–459 (ASSS…SSSG), 524–543 (KKKQ…GSGE), and 554–606 (AGLG…RLSG). Positions 215 to 229 (HQLHSQHLHKRHLKG) are enriched in basic residues. Polar residues-rich tracts occupy residues 246 to 255 (RRTQSLSTAI) and 371 to 385 (EPQQ…QLQR). Ser-250 bears the Phosphoserine mark. Over residues 438-459 (NSNSNSSGNSNIINNNSSSSSG) the composition is skewed to low complexity. Over residues 528–541 (QIASESQTNNNTGS) the composition is skewed to polar residues. The RanBP2-type 3 zinc finger occupies 643–673 (RSKMWICIKCSYAYNRLWLQTCEMCEAKAEQ). Residues 684 to 703 (QQQQQQHHHHHLQQQQAEAP) form a disordered region. 2 RanBP2-type zinc fingers span residues 704–733 (RDEP…SKLK) and 744–774 (RKGE…HRQP). Disordered stretches follow at residues 786–811 (RPDG…HQSG) and 860–884 (SLQQ…GSIV). The segment covering 860–871 (SLQQQRNSSSSG) has biased composition (polar residues). Residues 927–956 (STKKWQCPACTYDNCAASVVCDICSSPRGL) form a RanBP2-type 6 zinc finger. Positions 1014–1321 (LFVDDSFPPA…FDCIDICKVR (308 aa)) constitute a Calpain catalytic domain. Residues Cys-1079, His-1245, and Asn-1265 contribute to the active site.

This sequence belongs to the peptidase C2 family.

Has a role in eye development. Functionally, calcium-regulated non-lysosomal thiol-protease. The chain is Calpain-D (sol) from Drosophila melanogaster (Fruit fly).